A 1059-amino-acid chain; its full sequence is Carbamoyl phosphate synthase large chain (1059 aa).

Residues 1–401 (MPKRKDIQKI…SLLKACRSLE (401 aa)) form a carboxyphosphate synthetic domain region. ATP contacts are provided by Arg-129, Arg-169, Gly-175, Gly-176, Arg-208, Ile-210, Glu-215, Gly-241, Ile-242, His-243, Gln-284, and Glu-298. One can recognise an ATP-grasp 1 domain in the interval 133 to 327 (KQLMEELGQP…IAKLAAKIAV (195 aa)). Mg(2+) is bound by residues Gln-284, Glu-298, and Asn-300. Mn(2+) is bound by residues Gln-284, Glu-298, and Asn-300. Residues 402–546 (VGVDHNELPA…YSTYGFENES (145 aa)) are oligomerization domain. The carbamoyl phosphate synthetic domain stretch occupies residues 547 to 929 (VKSSKESVLV…ALYKAFEASY (383 aa)). The region spanning 671–861 (EQALKELDIP…MAQVATRLIL (191 aa)) is the ATP-grasp 2 domain. Residues Arg-707, Ser-746, Ile-748, Glu-752, Gly-777, Val-778, His-779, Ser-780, Gln-820, and Glu-832 each coordinate ATP. Residues Gln-820, Glu-832, and Asn-834 each coordinate Mg(2+). The Mn(2+) site is built by Gln-820, Glu-832, and Asn-834. An MGS-like domain is found at 930-1059 (LHLPNFGNVV…ESRSFTTEAI (130 aa)). Positions 930-1059 (LHLPNFGNVV…ESRSFTTEAI (130 aa)) are allosteric domain.

It belongs to the CarB family. Composed of two chains; the small (or glutamine) chain promotes the hydrolysis of glutamine to ammonia, which is used by the large (or ammonia) chain to synthesize carbamoyl phosphate. Tetramer of heterodimers (alpha,beta)4. Requires Mg(2+) as cofactor. Mn(2+) is required as a cofactor.

It carries out the reaction hydrogencarbonate + L-glutamine + 2 ATP + H2O = carbamoyl phosphate + L-glutamate + 2 ADP + phosphate + 2 H(+). It catalyses the reaction hydrogencarbonate + NH4(+) + 2 ATP = carbamoyl phosphate + 2 ADP + phosphate + 2 H(+). It participates in amino-acid biosynthesis; L-arginine biosynthesis; carbamoyl phosphate from bicarbonate: step 1/1. The protein operates within pyrimidine metabolism; UMP biosynthesis via de novo pathway; (S)-dihydroorotate from bicarbonate: step 1/3. Large subunit of the glutamine-dependent carbamoyl phosphate synthetase (CPSase). CPSase catalyzes the formation of carbamoyl phosphate from the ammonia moiety of glutamine, carbonate, and phosphate donated by ATP, constituting the first step of 2 biosynthetic pathways, one leading to arginine and/or urea and the other to pyrimidine nucleotides. The large subunit (synthetase) binds the substrates ammonia (free or transferred from glutamine from the small subunit), hydrogencarbonate and ATP and carries out an ATP-coupled ligase reaction, activating hydrogencarbonate by forming carboxy phosphate which reacts with ammonia to form carbamoyl phosphate. In Streptococcus gordonii (strain Challis / ATCC 35105 / BCRC 15272 / CH1 / DL1 / V288), this protein is Carbamoyl phosphate synthase large chain.